We begin with the raw amino-acid sequence, 278 residues long: Large ribosomal subunit protein uL2 (278 aa).

Disordered regions lie at residues 33–53 and 221–278; these read LTEGKRKTGGRNNKGHVTSRG and RGVA…KKKR. The span at 269-278 shows a compositional bias: basic residues; the sequence is IRSRHAKKKR.

It belongs to the universal ribosomal protein uL2 family. Part of the 50S ribosomal subunit. Forms a bridge to the 30S subunit in the 70S ribosome.

Functionally, one of the primary rRNA binding proteins. Required for association of the 30S and 50S subunits to form the 70S ribosome, for tRNA binding and peptide bond formation. It has been suggested to have peptidyltransferase activity; this is somewhat controversial. Makes several contacts with the 16S rRNA in the 70S ribosome. This chain is Large ribosomal subunit protein uL2, found in Novosphingobium aromaticivorans (strain ATCC 700278 / DSM 12444 / CCUG 56034 / CIP 105152 / NBRC 16084 / F199).